Here is a 201-residue protein sequence, read N- to C-terminus: Guanylyl cyclase-activating protein 1 (201 aa).

A lipid anchor (N-myristoyl glycine) is attached at glycine 2. Residue asparagine 3 is modified to Deamidated asparagine. EF-hand domains follow at residues 31 to 49, 51 to 86, 87 to 122, and 131 to 166; these read SGQL…KNLS, SASQ…VLKG, KVEQ…IRAI, and TAEE…DQML. Ca(2+)-binding residues include aspartate 64, asparagine 66, aspartate 68, tyrosine 70, glutamate 75, aspartate 100, aspartate 102, asparagine 104, cysteine 106, glutamate 111, aspartate 144, asparagine 146, aspartate 148, glutamate 150, and glutamate 155.

In terms of assembly, homodimer. In terms of tissue distribution, in the retina, it is expressed in rod and cone photoreceptors.

It is found in the membrane. The protein localises to the photoreceptor inner segment. The protein resides in the cell projection. Its subcellular location is the cilium. It localises to the photoreceptor outer segment. Functionally, stimulates retinal guanylyl cyclase when free calcium ions concentration is low and inhibits guanylyl cyclase when free calcium ions concentration is elevated. This Ca(2+)-sensitive regulation of retinal guanylyl cyclase is a key event in recovery of the dark state of rod photoreceptors following light exposure. May be involved in cone photoreceptor light response and recovery of response in bright light. The chain is Guanylyl cyclase-activating protein 1 (GUCA1A) from Homo sapiens (Human).